A 337-amino-acid polypeptide reads, in one-letter code: SNTRVEETMKTLNVGKEDLLMWSIRQQCEVGEELIDRWGSDSDDCFRDNEGRGQWVKGKELVKRQNNNHFAHHTCNKSWRCGISTSKMYSKLECQDDTDECQVYILDAEGNPINVTVDTVLHRDGVSMILKQKSTFTTRQIKAACLLIKDDKNNPESVTREHCLIDNDIYDLSKNTWNCKFNRCIKRKVEHRVKKRPPTWRHNVRAKYTEGDTATKGDLMHIQEELMYENDLLKMNIELMHAHINKLNNMLHDLIVSVAKVDERLIGNLMNNSVSSTFLSDDTFLLMPCTNPPAHTSNCYNNSIYKEGRWVANTDSSQCIDFSNYKELAIDDDVEIL.

4 N-linked (GlcNAc...) asparagine; by host glycosylation sites follow: Asn-76, Asn-114, Asn-271, and Asn-301.

The protein belongs to the baculoviridae gp64 family. In terms of processing, palmitoylated.

It localises to the virion membrane. It is found in the host cell membrane. In terms of biological role, envelope phosphoglycoprotein which mediates the fusion of viral and host endosomal membranes leading to virus entry into the host cell. In Lepidoptera (butterflies and moths), this protein is Major envelope glycoprotein (GP67).